A 273-amino-acid polypeptide reads, in one-letter code: NH(3)-dependent NAD(+) synthetase (273 aa).

47-54 is an ATP binding site; sequence GISGGQDS. Aspartate 53 serves as a coordination point for Mg(2+). Residue arginine 139 coordinates deamido-NAD(+). Threonine 159 contributes to the ATP binding site. Residue glutamate 164 participates in Mg(2+) binding. Deamido-NAD(+) contacts are provided by lysine 172 and aspartate 179. ATP is bound by residues lysine 188 and threonine 210. Residue 259-260 participates in deamido-NAD(+) binding; that stretch reads HK.

It belongs to the NAD synthetase family. In terms of assembly, homodimer.

The catalysed reaction is deamido-NAD(+) + NH4(+) + ATP = AMP + diphosphate + NAD(+) + H(+). The protein operates within cofactor biosynthesis; NAD(+) biosynthesis; NAD(+) from deamido-NAD(+) (ammonia route): step 1/1. Functionally, catalyzes the ATP-dependent amidation of deamido-NAD to form NAD. Uses ammonia as a nitrogen source. In Staphylococcus saprophyticus subsp. saprophyticus (strain ATCC 15305 / DSM 20229 / NCIMB 8711 / NCTC 7292 / S-41), this protein is NH(3)-dependent NAD(+) synthetase.